We begin with the raw amino-acid sequence, 287 residues long: Cyclopropane mycolic acid synthase 1 (287 aa).

S-adenosyl-L-methionine-binding positions include 33–34 (YS), 68–76 (LLDVGCGWG), 94–99 (TLSKNQ), and 123–124 (WE). Cys269 is an active-site residue.

It belongs to the CFA/CMAS family. In terms of assembly, homodimer.

It is found in the cytoplasm. It carries out the reaction a 1-acyl-2-(9Z)-enoyl-sn-glycero-3-phospholipid + S-adenosyl-L-methionine = a 1-acyl-2-(9-cyclopronane)-acyl-sn-glycero-3-phospholipid + S-adenosyl-L-homocysteine + H(+). Its pathway is lipid metabolism; mycolic acid biosynthesis. Its function is as follows. Catalyzes the conversion of a double bond to a cyclopropane ring at the distal position of an alpha mycolic acid via the transfer of a methylene group from S-adenosyl-L-methionine. Cyclopropanated mycolic acids are key factors participating in cell envelope permeability, host immunomodulation and persistence. This chain is Cyclopropane mycolic acid synthase 1 (cmaA1), found in Mycobacterium tuberculosis (strain ATCC 25177 / H37Ra).